The following is a 377-amino-acid chain: Lactosylceramide 1,3-N-acetyl-beta-D-glucosaminyltransferase A (377 aa).

The Cytoplasmic portion of the chain corresponds to 1–12 (MLISARRLRRCQ). The chain crosses the membrane as a helical; Signal-anchor for type II membrane protein span at residues 13–30 (FLQLLASCFVLSLMALLV). Residues 31 to 377 (QEDNSLISHV…DTYPCSAAWS (347 aa)) lie on the Lumenal side of the membrane. N56, N167, and N275 each carry an N-linked (GlcNAc...) asparagine glycan.

This sequence belongs to the glycosyltransferase 31 family.

The protein localises to the golgi apparatus membrane. It carries out the reaction a beta-D-Gal-(1-&gt;4)-beta-D-Glc-(1&lt;-&gt;1)-Cer(d18:1(4E)) + UDP-N-acetyl-alpha-D-glucosamine = a beta-D-GlcNAc-(1-&gt;3)-beta-D-Gal-(1-&gt;4)-beta-D-Glc-(1&lt;-&gt;1)-Cer(d18:1(4E)) + UDP + H(+). It catalyses the reaction a neolactoside nLc4Cer(d18:1(4E)) + UDP-N-acetyl-alpha-D-glucosamine = a neolactoside IV(3)-beta-GlcNAc-nLc4Cer(d18:1(4E)) + UDP + H(+). It functions in the pathway protein modification; protein glycosylation. In terms of biological role, beta-1,3-N-acetylglucosaminyltransferase that plays a key role in the synthesis of lacto- or neolacto-series carbohydrate chains on glycolipids. The protein is Lactosylceramide 1,3-N-acetyl-beta-D-glucosaminyltransferase A (b3gnt5-a) of Xenopus laevis (African clawed frog).